Here is a 275-residue protein sequence, read N- to C-terminus: NH(3)-dependent NAD(+) synthetase (275 aa).

46–53 (GISGGQDS) is a binding site for ATP. A Mg(2+)-binding site is contributed by Asp52. Arg140 contributes to the deamido-NAD(+) binding site. Thr160 is a binding site for ATP. Glu165 serves as a coordination point for Mg(2+). Deamido-NAD(+)-binding residues include Lys173 and Asp180. ATP is bound by residues Lys189 and Thr211. 260–261 (HK) contacts deamido-NAD(+).

The protein belongs to the NAD synthetase family. Homodimer.

The catalysed reaction is deamido-NAD(+) + NH4(+) + ATP = AMP + diphosphate + NAD(+) + H(+). It participates in cofactor biosynthesis; NAD(+) biosynthesis; NAD(+) from deamido-NAD(+) (ammonia route): step 1/1. Catalyzes the ATP-dependent amidation of deamido-NAD to form NAD. Uses ammonia as a nitrogen source. This Salmonella enteritidis PT4 (strain P125109) protein is NH(3)-dependent NAD(+) synthetase.